We begin with the raw amino-acid sequence, 775 residues long: MHKNSLLGQIIYTSIMSAVLLMACLEWFLWLAAFLYCLVKVFQKSEHWSINVLCIIVGTAFVLLRVIFLPIMVVTLPLPDAIAKLWPEEMVSFLQWFAFWAFAILLTVPWLFCIYQVVTNQLGRTKRMKQVLDDVTAPKVVIVMPCYREEPEVLIKAINSVVDCDYPPSCIHVFLSFDGEEEDNLYLNTISQLGVLLKTESHPRSIDVKYRSARVTISRFPHGGKRHCQKVTFKLIDRVYEEYLKRNDNLFILFIDSDCILDKVCLQNFVYDMELSPGNTGEMLAMTGVITSTTKKHSIITLLQDMEYIHGQLFERTVESGCGSVTCLPGALTMLRFSAFRRMAKYYFVDKAEQCEDLFDFAKCHLGEDRWLTHLFMIGAKKRHQIQMCTSAFCKTEAVQSTRSLVKQRRRWFLGFITNEVCMLTDWRLWKRYPILILVRFMQNTIRTTALLFFVMVLAIMTTVKKVDDLPVGFIAISLGLNWMLMLYFGAKLRRFKIWLYPLMFILNPFYNWYYMVYGIFTAGQRTWGGPRADAAAADSHTTAREAAEQAEKQGDELNVVPETFKAAHEARRAASNRESTTTSELGRTKSVIRPPGKIDGKFSARQKTASGMYAHPDEMDISANDVEKGRRGTRGFFADRDSLDSISSAQNIDLGVSTPRRMKLLMNEEDLRKYQLGQQIQNRNSGIDDAEGIYRQPIRTPSAFPHAHSASANDIPLHDLGANDTAAQGSRSEDIQRFSEGRGIGTRADNGRSRNVGNSSFASRMAKRTPKTSR.

Helical transmembrane passes span 19 to 39, 54 to 74, 94 to 114, 441 to 461, 470 to 490, and 498 to 518; these read VLLM…YCLV, CIIV…IMVV, LQWF…LFCI, FMQN…LAIM, LPVG…LYFG, and IWLY…YMVY. Residues 532-541 show a composition bias toward low complexity; sequence RADAAAADSH. Disordered stretches follow at residues 532–603 and 702–775; these read RADA…DGKF and PSAF…KTSR. The span at 542–556 shows a compositional bias: basic and acidic residues; the sequence is TTAREAAEQAEKQGD. Residues 577–586 show a composition bias toward polar residues; the sequence is NRESTTTSEL. Positions 702–713 are enriched in low complexity; that stretch reads PSAFPHAHSASA. An N-linked (GlcNAc...) asparagine glycan is attached at asparagine 724. The segment covering 732 to 741 has biased composition (basic and acidic residues); it reads RSEDIQRFSE. Residues 754–763 are compositionally biased toward polar residues; that stretch reads SRNVGNSSFA. An N-linked (GlcNAc...) asparagine glycan is attached at asparagine 759. The segment covering 766 to 775 has biased composition (basic residues); it reads MAKRTPKTSR.

It belongs to the chitin synthase family. Class VII subfamily.

It localises to the cell membrane. It carries out the reaction [(1-&gt;4)-N-acetyl-beta-D-glucosaminyl](n) + UDP-N-acetyl-alpha-D-glucosamine = [(1-&gt;4)-N-acetyl-beta-D-glucosaminyl](n+1) + UDP + H(+). Its function is as follows. Polymerizes chitin, a structural polymer of the cell wall and septum, by transferring the sugar moiety of UDP-GlcNAc to the non-reducing end of the growing chitin polymer. Shows additive effects in septum formation with CHS1, CHS2, CHS3A, CHS4, CHS5 and CHS7. Involved in virulence and mediates mycotoxin deoxinivalenol (DON) biosynthesis via the regulation of the expression of TRI4, TRI5 and TRI6. The polypeptide is Chitin synthase 6 (Gibberella zeae (strain ATCC MYA-4620 / CBS 123657 / FGSC 9075 / NRRL 31084 / PH-1) (Wheat head blight fungus)).